The chain runs to 366 residues: Mitogen-activated protein kinase CPK1 (366 aa).

A Protein kinase domain is found at 17–302; that stretch reads KLEEIVGEGA…SPSKRITVEE (286 aa). ATP contacts are provided by residues 22-30 and Lys45; that span reads VGEGAYGLV. Residue Asp140 is the Proton acceptor of the active site. Position 181 is a phosphothreonine (Thr181). The TXY signature appears at 181–183; that stretch reads TEY. Residue Tyr183 is modified to Phosphotyrosine.

This sequence belongs to the protein kinase superfamily. CMGC Ser/Thr protein kinase family. MAP kinase subfamily. Mg(2+) serves as cofactor. Post-translationally, dually phosphorylated on Thr-181 and Tyr-183, which activates the enzyme.

The enzyme catalyses L-seryl-[protein] + ATP = O-phospho-L-seryl-[protein] + ADP + H(+). It catalyses the reaction L-threonyl-[protein] + ATP = O-phospho-L-threonyl-[protein] + ADP + H(+). Activated by tyrosine and threonine phosphorylation. Functionally, responds to activation by environmental stress by phosphorylating downstream targets. This chain is Mitogen-activated protein kinase CPK1 (CPK1), found in Cryptococcus neoformans var. neoformans serotype D (strain B-3501A) (Filobasidiella neoformans).